A 202-amino-acid polypeptide reads, in one-letter code: Endoribonuclease YbeY (202 aa).

Zn(2+) is bound by residues H120, H124, and H130.

It belongs to the endoribonuclease YbeY family. Zn(2+) serves as cofactor.

The protein resides in the cytoplasm. Functionally, single strand-specific metallo-endoribonuclease involved in late-stage 70S ribosome quality control and in maturation of the 3' terminus of the 16S rRNA. The sequence is that of Endoribonuclease YbeY from Corynebacterium kroppenstedtii (strain DSM 44385 / JCM 11950 / CIP 105744 / CCUG 35717).